The chain runs to 363 residues: Carbamoyl phosphate synthase small chain (363 aa).

Residues 1–171 are CPSase; sequence MEDGTLFAGA…PYRIPGPGPR (171 aa). 3 residues coordinate L-glutamine: Ser-39, Gly-219, and Gly-221. Residues 171-359 form the Glutamine amidotransferase type-1 domain; the sequence is RVVAVDFGAK…LALVDRSAVS (189 aa). Cys-248 (nucleophile) is an active-site residue. L-glutamine-binding residues include Leu-249, Gln-252, Asn-290, Gly-292, and Tyr-293. Residues His-332 and Glu-334 contribute to the active site.

This sequence belongs to the CarA family. Composed of two chains; the small (or glutamine) chain promotes the hydrolysis of glutamine to ammonia, which is used by the large (or ammonia) chain to synthesize carbamoyl phosphate. Tetramer of heterodimers (alpha,beta)4.

The enzyme catalyses hydrogencarbonate + L-glutamine + 2 ATP + H2O = carbamoyl phosphate + L-glutamate + 2 ADP + phosphate + 2 H(+). It carries out the reaction L-glutamine + H2O = L-glutamate + NH4(+). Its pathway is amino-acid biosynthesis; L-arginine biosynthesis; carbamoyl phosphate from bicarbonate: step 1/1. It participates in pyrimidine metabolism; UMP biosynthesis via de novo pathway; (S)-dihydroorotate from bicarbonate: step 1/3. In terms of biological role, small subunit of the glutamine-dependent carbamoyl phosphate synthetase (CPSase). CPSase catalyzes the formation of carbamoyl phosphate from the ammonia moiety of glutamine, carbonate, and phosphate donated by ATP, constituting the first step of 2 biosynthetic pathways, one leading to arginine and/or urea and the other to pyrimidine nucleotides. The small subunit (glutamine amidotransferase) binds and cleaves glutamine to supply the large subunit with the substrate ammonia. This is Carbamoyl phosphate synthase small chain from Symbiobacterium thermophilum (strain DSM 24528 / JCM 14929 / IAM 14863 / T).